Consider the following 291-residue polypeptide: UPF0276 protein VV1_0952 (291 aa).

The protein belongs to the UPF0276 family.

This is UPF0276 protein VV1_0952 from Vibrio vulnificus (strain CMCP6).